A 368-amino-acid polypeptide reads, in one-letter code: tRNA 2-selenouridine synthase (368 aa).

Residues 15–138 (MLSGHPMIDV…MRQYLIEVID (124 aa)) enclose the Rhodanese domain. Catalysis depends on C98, which acts as the S-selanylcysteine intermediate.

The protein belongs to the SelU family. Monomer.

It catalyses the reaction 5-methylaminomethyl-2-thiouridine(34) in tRNA + selenophosphate + (2E)-geranyl diphosphate + H2O + H(+) = 5-methylaminomethyl-2-selenouridine(34) in tRNA + (2E)-thiogeraniol + phosphate + diphosphate. It carries out the reaction 5-methylaminomethyl-2-thiouridine(34) in tRNA + (2E)-geranyl diphosphate = 5-methylaminomethyl-S-(2E)-geranyl-thiouridine(34) in tRNA + diphosphate. The catalysed reaction is 5-methylaminomethyl-S-(2E)-geranyl-thiouridine(34) in tRNA + selenophosphate + H(+) = 5-methylaminomethyl-2-(Se-phospho)selenouridine(34) in tRNA + (2E)-thiogeraniol. The enzyme catalyses 5-methylaminomethyl-2-(Se-phospho)selenouridine(34) in tRNA + H2O = 5-methylaminomethyl-2-selenouridine(34) in tRNA + phosphate. Involved in the post-transcriptional modification of the uridine at the wobble position (U34) of tRNA(Lys), tRNA(Glu) and tRNA(Gln). Catalyzes the conversion of 2-thiouridine (S2U-RNA) to 2-selenouridine (Se2U-RNA). Acts in a two-step process involving geranylation of 2-thiouridine (S2U) to S-geranyl-2-thiouridine (geS2U) and subsequent selenation of the latter derivative to 2-selenouridine (Se2U) in the tRNA chain. The protein is tRNA 2-selenouridine synthase of Shewanella woodyi (strain ATCC 51908 / MS32).